The primary structure comprises 692 residues: Potassium-transporting ATPase ATP-binding subunit (692 aa).

Transmembrane regions (helical) follow at residues 35–55 (VMFI…KDLY), 64–84 (LQIS…EAIA), 213–233 (IALT…VMSL), and 254–274 (ILIS…LSAI). Asp307 (4-aspartylphosphate intermediate) is an active-site residue. ATP contacts are provided by residues Asp344, Glu348, 377 to 384 (FSASTKMS), and Lys400. Positions 523 and 527 each coordinate Mg(2+). The next 3 membrane-spanning stretches (helical) occupy residues 592 to 612 (YFAI…VGPL), 626 to 646 (AVLS…PLAL), and 672 to 692 (MVIP…LGII).

Belongs to the cation transport ATPase (P-type) (TC 3.A.3) family. Type IA subfamily. The system is composed of three essential subunits: KdpA, KdpB and KdpC.

It localises to the cell inner membrane. The catalysed reaction is K(+)(out) + ATP + H2O = K(+)(in) + ADP + phosphate + H(+). Its function is as follows. Part of the high-affinity ATP-driven potassium transport (or Kdp) system, which catalyzes the hydrolysis of ATP coupled with the electrogenic transport of potassium into the cytoplasm. This subunit is responsible for energy coupling to the transport system and for the release of the potassium ions to the cytoplasm. The protein is Potassium-transporting ATPase ATP-binding subunit of Leptospira interrogans serogroup Icterohaemorrhagiae serovar Lai (strain 56601).